Here is a 338-residue protein sequence, read N- to C-terminus: MKIYYDKDCNQSVLKGKRVAVIGYGSQGHAHANNLKDSGVDVVVGLKADSSSVAKATGAGLTVLPTADAVKGADVVMILLPDEIQGDVYREEVGPYLKQGAYLAFGHGFNIHFGQITPRPDINVIMAAPKGPGHLVRHEYTRGGGVPCLIAIHHDPSGNSRDVALAYASAIGGGRAGIIETSFKEETETDLFGEQAVLCGGISALIQAGFETLVEAGYSPEMAYFECLHETKLIVDLIYEGGIANMRYSISNTAEYGDLTRGPRVITDETKKEMKQILWEIQSGQFAKEWMLENKANKPTFNALRRKGMEHPIEDVGARLRSMMSWIGSSKIVDKSKN.

Residues 1–181 form the KARI N-terminal Rossmann domain; the sequence is MKIYYDKDCN…GGGRAGIIET (181 aa). Residues 24–27, Lys47, Ser50, Ser52, and 82–85 each bind NADP(+); these read YGSQ and DEIQ. His107 is an active-site residue. Gly133 lines the NADP(+) pocket. One can recognise a KARI C-terminal knotted domain in the interval 182–327; it reads SFKEETETDL…ARLRSMMSWI (146 aa). Mg(2+) is bound by residues Asp190, Glu194, Glu226, and Glu230. A substrate-binding site is contributed by Ser251.

Belongs to the ketol-acid reductoisomerase family. Requires Mg(2+) as cofactor.

The catalysed reaction is (2R)-2,3-dihydroxy-3-methylbutanoate + NADP(+) = (2S)-2-acetolactate + NADPH + H(+). The enzyme catalyses (2R,3R)-2,3-dihydroxy-3-methylpentanoate + NADP(+) = (S)-2-ethyl-2-hydroxy-3-oxobutanoate + NADPH + H(+). It participates in amino-acid biosynthesis; L-isoleucine biosynthesis; L-isoleucine from 2-oxobutanoate: step 2/4. The protein operates within amino-acid biosynthesis; L-valine biosynthesis; L-valine from pyruvate: step 2/4. In terms of biological role, involved in the biosynthesis of branched-chain amino acids (BCAA). Catalyzes an alkyl-migration followed by a ketol-acid reduction of (S)-2-acetolactate (S2AL) to yield (R)-2,3-dihydroxy-isovalerate. In the isomerase reaction, S2AL is rearranged via a Mg-dependent methyl migration to produce 3-hydroxy-3-methyl-2-ketobutyrate (HMKB). In the reductase reaction, this 2-ketoacid undergoes a metal-dependent reduction by NADPH to yield (R)-2,3-dihydroxy-isovalerate. This is Ketol-acid reductoisomerase (NADP(+)) from Geobacter sulfurreducens (strain ATCC 51573 / DSM 12127 / PCA).